The following is an 871-amino-acid chain: Speckle targeted PIP5K1A-regulated poly(A) polymerase (871 aa).

The Matrin-type zinc finger occupies Phe16–Leu46. Residues Arg56–Gln128 form the RRM domain. An ATP-binding site is contributed by Ser205. Mg(2+) contacts are provided by Asp216 and Asp218. The UTP site is built by Asp216 and Asp218. Positions Gln252–Gly321 are disordered. Over residues Ala259–Ser269 the composition is skewed to pro residues. Asn392 is an ATP binding site. UTP-binding residues include Asn392, Arg414, Tyr432, and His547. The region spanning Leu489–His547 is the PAP-associated domain. Positions Ser596–Lys871 are KA1; binds the bulging loops of U6 snRNA but is dispensable for terminal uridylyltransferase activity. Positions Gly636 to Glu684 are disordered. A compositionally biased stretch (basic and acidic residues) spans Ala659–Glu669. Phosphoserine is present on Ser748.

It belongs to the DNA polymerase type-B-like family. In terms of assembly, associates with the cleavage and polyadenylation specificity factor (CPSF) complex. Interacts with CPSF1 and CPSF3; the interaction is direct. Interacts with PIP5K1A. Mg(2+) serves as cofactor. Mn(2+) is required as a cofactor. Phosphorylated by CK1 in the proline-rich (Pro-rich) region.

It localises to the nucleus. The protein resides in the nucleolus. Its subcellular location is the nucleus speckle. The catalysed reaction is RNA(n) + UTP = RNA(n)-3'-uridine ribonucleotide + diphosphate. It carries out the reaction RNA(n) + ATP = RNA(n)-3'-adenine ribonucleotide + diphosphate. Its activity is regulated as follows. Adenylyltransferase activity is specifically phosphatidylinositol 4,5-bisphosphate (PtdIns(4,5)P2). Poly(A) polymerase that creates the 3'-poly(A) tail of specific pre-mRNAs. Localizes to nuclear speckles together with PIP5K1A and mediates polyadenylation of a select set of mRNAs, such as HMOX1. In addition to polyadenylation, it is also required for the 3'-end cleavage of pre-mRNAs: binds to the 3'UTR of targeted pre-mRNAs and promotes the recruitment and assembly of the CPSF complex on the 3'UTR of pre-mRNAs. In addition to adenylyltransferase activity, also has uridylyltransferase activity. However, the ATP ratio is higher than UTP in cells, suggesting that it functions primarily as a poly(A) polymerase. Acts as a specific terminal uridylyltransferase for U6 snRNA in vitro: responsible for a controlled elongation reaction that results in the restoration of the four 3'-terminal UMP-residues found in newly transcribed U6 snRNA. Not involved in replication-dependent histone mRNA degradation. The polypeptide is Speckle targeted PIP5K1A-regulated poly(A) polymerase (TUT1) (Bos taurus (Bovine)).